We begin with the raw amino-acid sequence, 540 residues long: Coatomer subunit delta (540 aa).

A disordered region spans residues 169–263 (RHEEMLRGKR…GMILGGKSGT (95 aa)). A compositionally biased stretch (gly residues) spans 179-197 (SGGYTGISGGGGMGSGGMG). A compositionally biased stretch (low complexity) spans 212–229 (NNNNNNNNNNNNNNNNNN). The segment covering 238 to 250 (SPNTSRPSAASSG) has biased composition (polar residues). Over residues 251–261 (SQGGMILGGKS) the composition is skewed to gly residues. An MHD domain is found at 304–540 (QEGVHITVEE…TLSVDTYEIK (237 aa)).

This sequence belongs to the adaptor complexes medium subunit family. Delta-COP subfamily. In terms of assembly, oligomeric complex that consists of at least the alpha, beta, beta', gamma, delta, epsilon and zeta subunits.

It is found in the cytoplasm. The protein localises to the golgi apparatus membrane. It localises to the cytoplasmic vesicle. The protein resides in the COPI-coated vesicle membrane. In terms of biological role, the coatomer is a cytosolic protein complex that binds to dilysine motifs and reversibly associates with Golgi non-clathrin-coated vesicles, which further mediate biosynthetic protein transport from the ER, via the Golgi up to the trans Golgi network. Coatomer complex is required for budding from Golgi membranes, and is essential for the retrograde Golgi-to-ER transport of dilysine-tagged proteins. This is Coatomer subunit delta (copd) from Dictyostelium discoideum (Social amoeba).